We begin with the raw amino-acid sequence, 37 residues long: Large ribosomal subunit protein bL36 (37 aa).

The protein belongs to the bacterial ribosomal protein bL36 family.

The protein is Large ribosomal subunit protein bL36 of Chromohalobacter salexigens (strain ATCC BAA-138 / DSM 3043 / CIP 106854 / NCIMB 13768 / 1H11).